Here is a 140-residue protein sequence, read N- to C-terminus: Large ribosomal subunit protein uL11 (140 aa).

It belongs to the universal ribosomal protein uL11 family. Part of the ribosomal stalk of the 50S ribosomal subunit. Interacts with L10 and the large rRNA to form the base of the stalk. L10 forms an elongated spine to which L12 dimers bind in a sequential fashion forming a multimeric L10(L12)X complex. In terms of processing, one or more lysine residues are methylated.

In terms of biological role, forms part of the ribosomal stalk which helps the ribosome interact with GTP-bound translation factors. The protein is Large ribosomal subunit protein uL11 of Brachyspira hyodysenteriae (strain ATCC 49526 / WA1).